Reading from the N-terminus, the 212-residue chain is Putative DNA-binding protein At1g48610 (212 aa).

Residues 1–130 (MAKTALTPPA…GRPKKDDVAA (130 aa)) are disordered. The segment covering 27 to 44 (NKPQTDATGVSATDTASQ) has biased composition (polar residues). DNA-binding regions (a.T hook) lie at residues 45–56 (KRGRGRPPKAKS), 70–79 (TKPSGRPKRN), and 94–98 (KKRGR). The segment covering 57 to 72 (DSSQIGAVSAKASTKP) has biased composition (polar residues). Residues 103–113 (TVTAAVVTTAT) show a composition bias toward low complexity. Residues 118 to 127 (RKRGRPKKDD) constitute a DNA-binding region (a.T hook 4). Residues 176 to 210 (DLKKRTALLQKKVKEAAAKLKQAVTAIDEVQKLAD) are a coiled coil.

It is found in the nucleus. May bind DNA. The protein is Putative DNA-binding protein At1g48610 of Arabidopsis thaliana (Mouse-ear cress).